We begin with the raw amino-acid sequence, 356 residues long: Glutamine synthetase (356 aa).

Residues 19-99 (IIAEYIWIGG…VMCDCYTPRG (81 aa)) enclose the GS beta-grasp domain. The GS catalytic domain maps to 106–356 (KRYNAAKILS…IAQTTILWKP (251 aa)).

The protein belongs to the glutamine synthetase family. In terms of assembly, homooctamer.

The protein localises to the cytoplasm. The enzyme catalyses L-glutamate + NH4(+) + ATP = L-glutamine + ADP + phosphate + H(+). In Hordeum vulgare (Barley), this protein is Glutamine synthetase.